We begin with the raw amino-acid sequence, 372 residues long: Cytochrome b (372 aa).

The next 4 helical transmembrane spans lie at 25–45 (FGSMLLTCLILQITTGFFLAI), 69–90 (WIMQNLHAIGASMFFICIYIHI), 105–125 (WLSGTALLILLMATAFFGYVL), and 170–190 (FFALHFILPFTIISMSSIHII). 2 residues coordinate heme b: histidine 75 and histidine 89. Histidine 174 and histidine 188 together coordinate heme b. Residue histidine 193 participates in a ubiquinone binding. Helical transmembrane passes span 218–238 (YKDMLMITIMITFMLLILSFS), 280–300 (LGGTLALFMSIAILMTAPFTH), 312–332 (LTQTMFWILIATFITITWTAT), and 339–358 (FISISQVTSIIYFSFFIINP).

It belongs to the cytochrome b family. In terms of assembly, the cytochrome bc1 complex contains 3 respiratory subunits (MT-CYB, CYC1 and UQCRFS1), 2 core proteins (UQCRC1 and UQCRC2) and probably 6 low-molecular weight proteins. Heme b serves as cofactor.

Its subcellular location is the mitochondrion inner membrane. Component of the ubiquinol-cytochrome c reductase complex (complex III or cytochrome b-c1 complex) that is part of the mitochondrial respiratory chain. The b-c1 complex mediates electron transfer from ubiquinol to cytochrome c. Contributes to the generation of a proton gradient across the mitochondrial membrane that is then used for ATP synthesis. This Dendroaspis polylepis polylepis (Black mamba) protein is Cytochrome b (MT-CYB).